Reading from the N-terminus, the 302-residue chain is Acetylglutamate kinase (302 aa).

Residues Gly67–Gly68, Arg89, and Asn194 each bind substrate.

Belongs to the acetylglutamate kinase family. ArgB subfamily.

It is found in the cytoplasm. The enzyme catalyses N-acetyl-L-glutamate + ATP = N-acetyl-L-glutamyl 5-phosphate + ADP. The protein operates within amino-acid biosynthesis; L-arginine biosynthesis; N(2)-acetyl-L-ornithine from L-glutamate: step 2/4. In terms of biological role, catalyzes the ATP-dependent phosphorylation of N-acetyl-L-glutamate. The protein is Acetylglutamate kinase of Hahella chejuensis (strain KCTC 2396).